The following is a 978-amino-acid chain: Sensor histidine kinase TodS (978 aa).

In terms of domain architecture, PAS 1 spans 32–103 (CEEHARIIFD…TQKRLVETAS (72 aa)). Residues 108–162 (VRCDVEILGKSGGREVIAVDFSLLPICNEEGSIVYLLAEGRNITDKKKAEAMLAL) form the PAC 1 domain. Residues 187–405 (KVSHELRTPL…LFQVKLPLNA (219 aa)) enclose the Histidine kinase 1 domain. Histidine 190 is subject to Phosphohistidine; by autocatalysis. Positions 452-567 (RVLIVEDNPD…ELRARVSNLV (116 aa)) constitute a Response regulatory domain. Aspartate 500 carries the 4-aspartylphosphate modification. Positions 611–681 (SEARWKAVYE…QRLANLLQGG (71 aa)) constitute a PAS 2 domain. A PAC 2 domain is found at 685–737 (YSVERSYLCKNGSTIWANASVSLMPQRVGESPVILQIIDDITEKKQAQENLNQ). Positions 757-974 (YIAHEINQPL…CFLVSIPARQ (218 aa)) constitute a Histidine kinase 2 domain. A Phosphohistidine modification is found at histidine 760.

In terms of processing, autophosphorylated. Activation requires a sequential transfer of a phosphate group from a His in the primary transmitter domain, to an Asp in the receiver domain and to a His in the secondary transmitter domain.

The protein resides in the cytoplasm. It carries out the reaction ATP + protein L-histidine = ADP + protein N-phospho-L-histidine.. With respect to regulation, activity is regulated by agonists and antagonists. Binding of agonists such as toluene or benzene to TodS stimulates autophosphorylation at His-190. Activity is inhibited by antagonists such as o-xylene, o-chlorotoluene and trimethylbenzene isomers, which bind to TodS but do not stimulate autophosphorylation. Agonists and antagonists bind to the same PAS domain. Its function is as follows. Member of the two-component regulatory system TodS/TodT involved in the regulation of toluene degradation. Phosphorylates TodT via a four-step phosphorelay in response to toluene. Can also be induced by benzene and ethylbenzene. The chain is Sensor histidine kinase TodS (todS) from Pseudomonas putida (strain DOT-T1E).